The chain runs to 230 residues: Large ribosomal subunit protein uL1 (230 aa).

It belongs to the universal ribosomal protein uL1 family. Part of the 50S ribosomal subunit.

Its function is as follows. Binds directly to 23S rRNA. The L1 stalk is quite mobile in the ribosome, and is involved in E site tRNA release. Functionally, protein L1 is also a translational repressor protein, it controls the translation of the L11 operon by binding to its mRNA. The polypeptide is Large ribosomal subunit protein uL1 (Staphylococcus aureus (strain Mu3 / ATCC 700698)).